The sequence spans 133 residues: Snaclec botrocetin subunit alpha (133 aa).

3 cysteine pairs are disulfide-bonded: cysteine 2–cysteine 13, cysteine 30–cysteine 128, and cysteine 103–cysteine 120. The C-type lectin domain occupies 9–129 (YEGNCYKFFQ…CAQKNPFVCK (121 aa)).

The protein belongs to the snaclec family. In terms of assembly, heterodimer of subunits alpha and beta; disulfide-linked. Botrocetin and vWF form a soluble complex. As to expression, expressed by the venom gland.

Its subcellular location is the secreted. Its function is as follows. Snaclec that binds to von Willebrand factor (VWF) and induces its interaction with GPIbalpha (GP1BA) (via the vWF A1 domain), resulting in platelet aggregation. This Bothrops jararaca (Jararaca) protein is Snaclec botrocetin subunit alpha.